The following is a 613-amino-acid chain: Dihydroxy-acid dehydratase (613 aa).

Asp81 contributes to the Mg(2+) binding site. Cys122 serves as a coordination point for [2Fe-2S] cluster. Positions 123 and 124 each coordinate Mg(2+). Lys124 is modified (N6-carboxylysine). Cys193 is a [2Fe-2S] cluster binding site. Glu489 is a binding site for Mg(2+). The active-site Proton acceptor is the Ser515.

The protein belongs to the IlvD/Edd family. Homodimer. Requires [2Fe-2S] cluster as cofactor. The cofactor is Mg(2+).

The enzyme catalyses (2R)-2,3-dihydroxy-3-methylbutanoate = 3-methyl-2-oxobutanoate + H2O. It catalyses the reaction (2R,3R)-2,3-dihydroxy-3-methylpentanoate = (S)-3-methyl-2-oxopentanoate + H2O. It functions in the pathway amino-acid biosynthesis; L-isoleucine biosynthesis; L-isoleucine from 2-oxobutanoate: step 3/4. It participates in amino-acid biosynthesis; L-valine biosynthesis; L-valine from pyruvate: step 3/4. Functions in the biosynthesis of branched-chain amino acids. Catalyzes the dehydration of (2R,3R)-2,3-dihydroxy-3-methylpentanoate (2,3-dihydroxy-3-methylvalerate) into 2-oxo-3-methylpentanoate (2-oxo-3-methylvalerate) and of (2R)-2,3-dihydroxy-3-methylbutanoate (2,3-dihydroxyisovalerate) into 2-oxo-3-methylbutanoate (2-oxoisovalerate), the penultimate precursor to L-isoleucine and L-valine, respectively. In Pseudomonas putida (strain ATCC 47054 / DSM 6125 / CFBP 8728 / NCIMB 11950 / KT2440), this protein is Dihydroxy-acid dehydratase.